Here is a 112-residue protein sequence, read N- to C-terminus: Large ribosomal subunit protein eL30x (112 aa).

The protein belongs to the eukaryotic ribosomal protein eL30 family.

The polypeptide is Large ribosomal subunit protein eL30x (RPL30C) (Arabidopsis thaliana (Mouse-ear cress)).